The chain runs to 66 residues: Alpha-conotoxin GID (66 aa).

An N-terminal signal peptide occupies residues methionine 1–serine 21. The propeptide occupies phenylalanine 22–threonine 44. An N-terminal tail important for activity on alpha-3-beta-2/CHRNA3-CHRNB2 and alpha-4-beta-2/CHRNA4-CHRNB2 nAChR region spans residues isoleucine 45–glutamate 48. Glutamate 48 carries the 4-carboxyglutamate modification. 2 cysteine pairs are disulfide-bonded: cysteine 49–cysteine 55 and cysteine 50–cysteine 63. The segment at serine 51–proline 53 is ser-Xaa-Pro motif, crucial for potent interaction with nAChR. 4-hydroxyproline is present on proline 60.

It belongs to the conotoxin A superfamily. Post-translationally, gamma-carboxyglutamation of Glu-48 seems to be not important for nAChR inhibition, since synthetic peptides without this modification do not show change in inhibition of alpha-7/CHRNA7 and alpha-3-beta-2/CHRNA3-CHRNB2 nAChR and show a 2.3-fold increase in inhibition of alpha-4-beta-2/CHRNA4-CHRNB2 nAChR. In terms of processing, hydroxylation of Pro-60 seems to be important for nAChR inhibition, since synthetic peptides without this modification show a small decrease in inhibition of alpha-7/CHRNA7 and alpha-3-beta-2/CHRNA3-CHRNB2 nAChR and a very important decrease in inhibition of alpha-4-beta-2/CHRNA4-CHRNB2 nAChR. An amidation of Cys-63 increases potency against alpha-7/CHRNA7 (2.6-fold) and alpha-3-beta-2/CHRNA3-CHRNB2 (2-fold) nAChR. On the other hand, the peptide has no more activity on alpha-4-beta-2/CHRNA4-CHRNB2 nAChR with an amidated Cys-63. In terms of tissue distribution, expressed by the venom duct.

Its subcellular location is the secreted. In terms of biological role, alpha-conotoxins act on postsynaptic membranes, they bind to the nicotinic acetylcholine receptors (nAChR) and thus inhibit them. This toxin reversibly blocks alpha-3-beta-2/CHRNA3-CHRNB2 (IC(50)=3.1-5.1 nM), alpha-7/CHRNA7 (IC(50)=4.5-5.1 nM), and alpha-4-beta-2/CHRNA4-CHRNB2 (IC(50)=128.6-390 nM) nAChRs. The sequence is that of Alpha-conotoxin GID from Conus geographus (Geography cone).